The primary structure comprises 219 residues: Protein VERNALIZATION 2 (219 aa).

In terms of domain architecture, CCT spans 138 to 180 (REAKVMRYREKKKRRRYEKQIRYESRKAYAEMRPRVKGRFAKV).

In terms of tissue distribution, mainly expressed in leaves, and at low levels in the shoot apical meristem (SAM).

It is found in the nucleus. Involved in the regulation of vernalization; this process in essential for flowering in cv. Bd29-1 but seems do not occur in cv. Bd21. In Brachypodium distachyon (Purple false brome), this protein is Protein VERNALIZATION 2.